A 288-amino-acid polypeptide reads, in one-letter code: Programmed cell death protein 1 (288 aa).

Positions 1 to 24 are cleaved as a signal peptide; sequence MWVRQVPWSFTWAVLQLSWQSGWL. At 25–169 the chain is on the extracellular side; that stretch reads LEVPNGPWRS…PKPEGRFQGM (145 aa). The Ig-like V-type domain occupies 31-139; sequence PWRSLTFYPA…PKAKIEESPG (109 aa). 4 N-linked (GlcNAc...) asparagine glycosylation sites follow: Asn49, Asn58, Asn74, and Asn116. Cys54 and Cys123 are oxidised to a cystine. The interaction with CD274/PDCD1L1 stretch occupies residues 70 to 77; the sequence is LSPSNQTE. The chain crosses the membrane as a helical span at residues 170–190; sequence VIGIMSALVGIPVLLLLAWAL. Residues 191-288 are Cytoplasmic-facing; that stretch reads AVFCSTSMSE…HEDGHCSWPL (98 aa). The ITIM motif signature appears at 223–228; sequence VAYEEL. The residue at position 225 (Tyr225) is a Phosphotyrosine. Residue Lys235 forms a Glycyl lysine isopeptide (Lys-Gly) (interchain with G-Cter in ubiquitin) linkage. Thr236 is modified (phosphothreonine; by MAPK3). The ITSM motif signature appears at 247 to 251; sequence EYATI. Phosphotyrosine is present on Tyr248. The interval 263-288 is disordered; it reads GRRGSADGLQGPRPPRHEDGHCSWPL. The segment covering 277-288 has biased composition (basic and acidic residues); the sequence is PRHEDGHCSWPL.

In terms of assembly, monomer. Interacts with CD274/PDCD1L1. Interacts with CD273/PDCD1LG2. Interacts with FBXO38; leading to ubiquitination and degradation by the proteasome. Ubiquitinated at Lys-235 by the SCF(FBXO38) complex, leading to its proteasomal degradation. Ubiquitinated via 'Lys-48'-linked polyubiquitin chains. Deubiquitinated and thus stabilized by USP5. In terms of processing, tyrosine phosphorylated at Tyr-225 (within ITIM motif) and Tyr-248 (ITSM motif) upon ligand binding. Phosphorylation at Tyr-248 promotes the recruitment of the protein tyrosine phosphatase PTPN11/SHP-2 that mediates dephosphorylation of key TCR proximal signaling molecules, such as ZAP70, PRKCQ/PKCtheta and CD247/CD3zeta. Phosphorylation at Thr-236 promotes the recruitment of the deubiquitinase USP5. In terms of tissue distribution, thymus-specific.

It localises to the cell membrane. Its function is as follows. Inhibitory receptor on antigen activated T-cells that plays a critical role in induction and maintenance of immune tolerance to self. Delivers inhibitory signals upon binding to ligands, such as CD274/PDCD1L1 and CD273/PDCD1LG2. Following T-cell receptor (TCR) engagement, PDCD1 associates with CD3-TCR in the immunological synapse and directly inhibits T-cell activation. Suppresses T-cell activation through the recruitment of PTPN11/SHP-2: following ligand-binding, PDCD1 is phosphorylated within the ITSM motif, leading to the recruitment of the protein tyrosine phosphatase PTPN11/SHP-2 that mediates dephosphorylation of key TCR proximal signaling molecules, such as ZAP70, PRKCQ/PKCtheta and CD247/CD3zeta. The PDCD1-mediated inhibitory pathway is exploited by tumors to attenuate anti-tumor immunity and facilitate tumor survival. This is Programmed cell death protein 1 from Mus musculus (Mouse).